The sequence spans 475 residues: MSPKTETKASVGFKAGVKDYRLTYYTPEYQTKDTDILAAFRVTPQPGVPPEEAGAAVAAESSTGTWTTVWTDGLTSLDRYKGRCYDIEPVPGEESQFIAYVAYPLDLFEEGSVTNLFTSIVGNVFGFKALRALRLEDLRIPPSYSKTFQGPPHGIQVERDKLNKYGRPLLGCTIKPKLGLSAKNYGRAVYECLRGGLDFTKDDENVNSQPFMRWRDRFVFCAEALNKAQAETGEIKGHYLNATAGTCEEMMKRAIFARELGVPIVMHDYLTGGFTANTSLAHYCRDNGLLLHIHRAMHAVIDRQRNHGMHFRVLAKALRMSGGDHIHAGTVVGKLEGERDVTLGFVDLLRDDFIEKDRSRGIYFTQDWVSMPGVLPVASGGIHVWHMPALTEIFGDDSVLQFGGGTLGHPWGNAPGAVANRVAVEACVQARNEGRDLAREGNEVIREAAKWSPELAAACEVWKEIKFEFETIDYL.

A propeptide spanning residues 1–2 (MS) is cleaved from the precursor. N-acetylproline is present on Pro-3. N6,N6,N6-trimethyllysine is present on Lys-14. Residues Asn-123 and Thr-173 each contribute to the substrate site. The active-site Proton acceptor is the Lys-175. Substrate is bound at residue Lys-177. Lys-201, Asp-203, and Glu-204 together coordinate Mg(2+). Lys-201 bears the N6-carboxylysine mark. The Proton acceptor role is filled by His-294. Residues Arg-295, His-327, and Ser-379 each contribute to the substrate site.

It belongs to the RuBisCO large chain family. Type I subfamily. In terms of assembly, heterohexadecamer of 8 large chains and 8 small chains; disulfide-linked. The disulfide link is formed within the large subunit homodimers. The cofactor is Mg(2+). Post-translationally, the disulfide bond which can form in the large chain dimeric partners within the hexadecamer appears to be associated with oxidative stress and protein turnover.

Its subcellular location is the plastid. It localises to the chloroplast. The catalysed reaction is 2 (2R)-3-phosphoglycerate + 2 H(+) = D-ribulose 1,5-bisphosphate + CO2 + H2O. The enzyme catalyses D-ribulose 1,5-bisphosphate + O2 = 2-phosphoglycolate + (2R)-3-phosphoglycerate + 2 H(+). Its function is as follows. RuBisCO catalyzes two reactions: the carboxylation of D-ribulose 1,5-bisphosphate, the primary event in carbon dioxide fixation, as well as the oxidative fragmentation of the pentose substrate in the photorespiration process. Both reactions occur simultaneously and in competition at the same active site. This chain is Ribulose bisphosphate carboxylase large chain, found in Keteleeria davidiana (David's keteleeria).